Reading from the N-terminus, the 129-residue chain is uncharacterized protein (129 aa).

Transmembrane regions (helical) follow at residues 35–55 (IVDGAFGPVSLLFWLLGWKIP) and 98–118 (ILLLNALCFRVKILLCAIILL).

It is found in the membrane. This is an uncharacterized protein from Saccharomyces cerevisiae (strain ATCC 204508 / S288c) (Baker's yeast).